Reading from the N-terminus, the 515-residue chain is 1-pyrroline-5-carboxylate dehydrogenase (515 aa).

Active-site residues include Glu286 and Cys320.

This sequence belongs to the aldehyde dehydrogenase family. RocA subfamily.

It carries out the reaction L-glutamate 5-semialdehyde + NAD(+) + H2O = L-glutamate + NADH + 2 H(+). It participates in amino-acid degradation; L-proline degradation into L-glutamate; L-glutamate from L-proline: step 2/2. The protein is 1-pyrroline-5-carboxylate dehydrogenase of Geobacillus kaustophilus (strain HTA426).